The chain runs to 366 residues: UDP-N-acetylglucosamine--N-acetylmuramyl-(pentapeptide) pyrophosphoryl-undecaprenol N-acetylglucosamine transferase (366 aa).

UDP-N-acetyl-alpha-D-glucosamine contacts are provided by residues 10–12, N124, R166, S196, and Q297; that span reads TGG.

It belongs to the glycosyltransferase 28 family. MurG subfamily.

It localises to the cell membrane. It carries out the reaction di-trans,octa-cis-undecaprenyl diphospho-N-acetyl-alpha-D-muramoyl-L-alanyl-D-glutamyl-meso-2,6-diaminopimeloyl-D-alanyl-D-alanine + UDP-N-acetyl-alpha-D-glucosamine = di-trans,octa-cis-undecaprenyl diphospho-[N-acetyl-alpha-D-glucosaminyl-(1-&gt;4)]-N-acetyl-alpha-D-muramoyl-L-alanyl-D-glutamyl-meso-2,6-diaminopimeloyl-D-alanyl-D-alanine + UDP + H(+). The protein operates within cell wall biogenesis; peptidoglycan biosynthesis. In terms of biological role, cell wall formation. Catalyzes the transfer of a GlcNAc subunit on undecaprenyl-pyrophosphoryl-MurNAc-pentapeptide (lipid intermediate I) to form undecaprenyl-pyrophosphoryl-MurNAc-(pentapeptide)GlcNAc (lipid intermediate II). This Alkaliphilus metalliredigens (strain QYMF) protein is UDP-N-acetylglucosamine--N-acetylmuramyl-(pentapeptide) pyrophosphoryl-undecaprenol N-acetylglucosamine transferase.